Here is a 177-residue protein sequence, read N- to C-terminus: Large ribosomal subunit protein uL6 (177 aa).

The protein belongs to the universal ribosomal protein uL6 family. Part of the 50S ribosomal subunit.

Functionally, this protein binds to the 23S rRNA, and is important in its secondary structure. It is located near the subunit interface in the base of the L7/L12 stalk, and near the tRNA binding site of the peptidyltransferase center. In Roseobacter denitrificans (strain ATCC 33942 / OCh 114) (Erythrobacter sp. (strain OCh 114)), this protein is Large ribosomal subunit protein uL6.